Here is a 224-residue protein sequence, read N- to C-terminus: Haloacetate dehalogenase H-2 (224 aa).

The active-site Nucleophile is the D10.

This sequence belongs to the HAD-like hydrolase superfamily. S-2-haloalkanoic acid dehalogenase family.

It carries out the reaction a haloacetate + H2O = a halide anion + glycolate + H(+). The sequence is that of Haloacetate dehalogenase H-2 (dehH2) from Moraxella sp. (strain B).